The primary structure comprises 362 residues: Innexin-17 (362 aa).

The next 4 membrane-spanning stretches (helical) occupy residues 27–47 (YFTV…QYVG), 101–121 (WVPF…VIWN), 189–209 (FLAT…MGLG), and 266–286 (LFIA…FDIF).

The protein belongs to the pannexin family.

Its subcellular location is the cell membrane. The protein localises to the cell junction. It localises to the gap junction. In terms of biological role, structural component of the gap junctions. This is Innexin-17 from Caenorhabditis elegans.